Reading from the N-terminus, the 221-residue chain is GTP cyclohydrolase III (221 aa).

Belongs to the archaeal-type GTP cyclohydrolase family.

The catalysed reaction is GTP + 3 H2O = 2-amino-5-formylamino-6-(5-phospho-D-ribosylamino)pyrimidin-4(3H)-one + 2 phosphate + 2 H(+). Functionally, catalyzes the formation of 2-amino-5-formylamino-6-ribofuranosylamino-4(3H)-pyrimidinone ribonucleotide monophosphate and inorganic phosphate from GTP. Also has an independent pyrophosphate phosphohydrolase activity. The protein is GTP cyclohydrolase III of Pyrobaculum islandicum (strain DSM 4184 / JCM 9189 / GEO3).